Here is a 460-residue protein sequence, read N- to C-terminus: Hydroxyproline dehydrogenase (460 aa).

The residue at position 310 (Lys-310) is an N6-acetyllysine.

This sequence belongs to the proline oxidase family. FAD is required as a cofactor.

The enzyme catalyses trans-4-hydroxy-L-proline + a quinone = (3R,5S)-1-pyrroline-3-hydroxy-5-carboxylate + a quinol + H(+). The catalysed reaction is L-proline + a quinone = (S)-1-pyrroline-5-carboxylate + a quinol + H(+). Hydroproxyproline dehydrogenase activity is inhibited by THFA,(1R,3R)3-OH-cyclopentane-COOH and 5-OH-1H-pyrazole-3-COOH. Dehydrogenase that converts trans-4-L-hydroxyproline to delta-1-pyrroline-3-hydroxy-5-carboxylate (Hyp) using ubiquinone-10 as the terminal electron acceptor. Can also use proline as a substrate but with a very much lower efficiency. Does not react with other diastereomers of Hyp: trans-4-D-hydroxyproline and cis-4-L-hydroxyproline. Ubiquininone analogs such as menadione, duroquinone and ubiquinone-1 react more efficiently than oxygen as the terminal electron acceptor during catalysis. This chain is Hydroxyproline dehydrogenase, found in Homo sapiens (Human).